Here is a 422-residue protein sequence, read N- to C-terminus: Oxysterol-binding protein 7 (422 aa).

The segment at Glu-283–Asp-313 is disordered. Positions Lys-293 to His-307 are enriched in basic residues. Positions Met-354–Ala-384 form a coiled coil. The segment at Thr-402–Asn-422 is disordered. The span at Ser-407–Asn-422 shows a compositional bias: low complexity.

It belongs to the OSBP family.

The polypeptide is Oxysterol-binding protein 7 (osbG) (Dictyostelium discoideum (Social amoeba)).